A 703-amino-acid chain; its full sequence is Elongation factor G (703 aa).

One can recognise a tr-type G domain in the interval 8–290 (ARYRNIGICA…AVIEYLPAPT (283 aa)). Residues 17 to 24 (AHVDAGKT), 88 to 92 (DTPGH), and 142 to 145 (NKMD) each bind GTP.

It belongs to the TRAFAC class translation factor GTPase superfamily. Classic translation factor GTPase family. EF-G/EF-2 subfamily.

The protein resides in the cytoplasm. Catalyzes the GTP-dependent ribosomal translocation step during translation elongation. During this step, the ribosome changes from the pre-translocational (PRE) to the post-translocational (POST) state as the newly formed A-site-bound peptidyl-tRNA and P-site-bound deacylated tRNA move to the P and E sites, respectively. Catalyzes the coordinated movement of the two tRNA molecules, the mRNA and conformational changes in the ribosome. This is Elongation factor G from Teredinibacter turnerae (strain ATCC 39867 / T7901).